The primary structure comprises 329 residues: Beta-ketoacyl-[acyl-carrier-protein] synthase III (329 aa).

Active-site residues include cysteine 113 and histidine 255. The ACP-binding stretch occupies residues 256–260 (QANQR). The active site involves asparagine 285.

It belongs to the thiolase-like superfamily. FabH family. In terms of assembly, homodimer.

It is found in the cytoplasm. The catalysed reaction is malonyl-[ACP] + acetyl-CoA + H(+) = 3-oxobutanoyl-[ACP] + CO2 + CoA. It participates in lipid metabolism; fatty acid biosynthesis. Its function is as follows. Catalyzes the condensation reaction of fatty acid synthesis by the addition to an acyl acceptor of two carbons from malonyl-ACP. Catalyzes the first condensation reaction which initiates fatty acid synthesis and may therefore play a role in governing the total rate of fatty acid production. Possesses both acetoacetyl-ACP synthase and acetyl transacylase activities. Its substrate specificity determines the biosynthesis of branched-chain and/or straight-chain of fatty acids. This chain is Beta-ketoacyl-[acyl-carrier-protein] synthase III, found in Chlorobium chlorochromatii (strain CaD3).